Here is a 644-residue protein sequence, read N- to C-terminus: Translation factor GUF1, mitochondrial (644 aa).

Residues 1-14 (MLRKAFRYLVPVRC) constitute a mitochondrion transit peptide. The tr-type G domain occupies 46–227 (ERYRNFSIVA…AIVDRIPPPT (182 aa)). Residues 55–62 (AHVDHGKS), 120–124 (DTPGH), and 174–177 (NKID) contribute to the GTP site.

This sequence belongs to the TRAFAC class translation factor GTPase superfamily. Classic translation factor GTPase family. LepA subfamily.

It is found in the mitochondrion inner membrane. The catalysed reaction is GTP + H2O = GDP + phosphate + H(+). Functionally, promotes mitochondrial protein synthesis. May act as a fidelity factor of the translation reaction, by catalyzing a one-codon backward translocation of tRNAs on improperly translocated ribosomes. Binds to mitochondrial ribosomes in a GTP-dependent manner. This Eremothecium gossypii (strain ATCC 10895 / CBS 109.51 / FGSC 9923 / NRRL Y-1056) (Yeast) protein is Translation factor GUF1, mitochondrial.